A 344-amino-acid polypeptide reads, in one-letter code: Heat-inducible transcription repressor HrcA (344 aa).

This sequence belongs to the HrcA family.

In terms of biological role, negative regulator of class I heat shock genes (grpE-dnaK-dnaJ and groELS operons). Prevents heat-shock induction of these operons. This Corynebacterium aurimucosum (strain ATCC 700975 / DSM 44827 / CIP 107346 / CN-1) (Corynebacterium nigricans) protein is Heat-inducible transcription repressor HrcA.